Reading from the N-terminus, the 170-residue chain is Cyclic dof factor 4 (170 aa).

The segment at 25–51 is disordered; sequence NEEETHPPEQEATIAVRSSSSSDLTAE. Residues 58 to 112 form a Dof-type zinc finger; it reads IACPRCKSMETKFCYFNNYNVNQPRHFCKGCHRYWTAGGALRNVPVGAGRRKSKP. Residues cysteine 60, cysteine 63, cysteine 85, and cysteine 88 each coordinate Zn(2+).

In terms of tissue distribution, expressed in the vasculature of cotyledons and hypocotyls, leaves and roots.

It localises to the nucleus. Transcription factor that binds specifically to a 5'-AA[AG]G-3' consensus core sequence. Transcriptional repressor of 'CONSTANS' expression. Regulates a photoperiodic flowering response. The protein is Cyclic dof factor 4 (CDF4) of Arabidopsis thaliana (Mouse-ear cress).